The sequence spans 216 residues: MANKRKEFIKLNLNKERKAFIELRGINLELLKEFLSSNVLPLTFIGSLLILILTIVYYFTLSGSVNELKNEISKEKSKKERLLSEIKRLEELKKTLETKKAIYEVVKIYNDMVIKILENPVNLPYGYSLQNFSLCAFRFKNCDIQEKLNKDKSFSLDKPIAQLDLVLFNRKLENYIPPDSIRKFTYVVIDNLPYRRVCIEPDYERLLAEKGHRKEE.

A helical transmembrane segment spans residues 39 to 59 (VLPLTFIGSLLILILTIVYYF). A coiled-coil region spans residues 59-108 (FTLSGSVNELKNEISKEKSKKERLLSEIKRLEELKKTLETKKAIYEVVKI).

The protein resides in the membrane. This is an uncharacterized protein from Aquifex aeolicus (strain VF5).